The sequence spans 968 residues: A disintegrin and metalloproteinase with thrombospondin motifs 1 (968 aa).

2 disordered regions span residues 1–23 (MQPKVPLGSRKQKPCSDMGDVQR) and 177–253 (APAV…RKKR). The N-terminal stretch at 1–48 (MQPKVPLGSRKQKPCSDMGDVQRAARSRGSLSAHMLLLLLASITMLLC) is a signal peptide. Residues 49 to 253 (ARGAHGRPTE…SGPGSIRKKR (205 aa)) constitute a propeptide that is removed on maturation. The Cysteine switch motif lies at 204–211 (AKCGVMDD). Zn(2+) is bound at residue Cys206. A compositionally biased stretch (polar residues) spans 214–229 (LPTSDSRPESQNTRNQ). The Peptidase M12B domain maps to 259–468 (RYVETMLVAD…GHGECLMDKP (210 aa)). Ca(2+) is bound by residues Glu262, Asp345, and Asp352. 4 disulfides stabilise this stretch: Cys334–Cys386, Cys363–Cys368, Cys380–Cys463, and Cys418–Cys447. His402 serves as a coordination point for Zn(2+). Glu403 is an active-site residue. Positions 406 and 412 each coordinate Zn(2+). Ca(2+)-binding residues include Cys463 and Asp466. The region spanning 477–559 (DLPGTLYDAN…TDMKHFATPV (83 aa)) is the Disintegrin domain. Intrachain disulfides connect Cys489-Cys512, Cys500-Cys522, Cys507-Cys541, and Cys535-Cys546. Asn548 carries N-linked (GlcNAc...) asparagine glycosylation. In terms of domain architecture, TSP type-1 1 spans 560-615 (HGSWGPWGPWGDCSRTCGGGVQYTMRECDNPVPKNGGKYCEGKRVRYRSCNIEDCP). Intrachain disulfides connect Cys572-Cys609, Cys576-Cys614, and Cys587-Cys599. N-linked (GlcNAc...) asparagine glycosylation is found at Asn721, Asn765, and Asn783. A spacer region spans residues 726 to 850 (KKMSGIVTST…YFMKKKTESF (125 aa)). 2 TSP type-1 domains span residues 855 to 911 (TFSE…LPCP) and 912 to 968 (HWQV…TQCS). Asn946 is a glycosylation site (N-linked (GlcNAc...) asparagine).

Zn(2+) serves as cofactor. In terms of processing, the precursor is cleaved by a furin endopeptidase. Glycosylated. Can be O-fucosylated by POFUT2 on a serine or a threonine residue found within the consensus sequence C1-X(2)-(S/T)-C2-G of the TSP type-1 repeat domains where C1 and C2 are the first and second cysteine residue of the repeat, respectively. Fucosylated repeats can then be further glycosylated by the addition of a beta-1,3-glucose residue by the glucosyltransferase, B3GALTL. Fucosylation mediates the efficient secretion of ADAMTS family members. Can also be C-glycosylated with one or two mannose molecules on tryptophan residues within the consensus sequence W-X-X-W of the TPRs, and N-glycosylated. These other glycosylations can also facilitate secretion.

The protein localises to the secreted. It localises to the extracellular space. Its subcellular location is the extracellular matrix. Its function is as follows. Metalloprotease which cleaves aggrecan, a cartilage proteoglycan, at the '1691-Glu-|-Leu-1692' site (within the chondroitin sulfate attachment domain), and may be involved in its turnover. Also cleaves COMP. Has angiogenic inhibitor activity. May play a critical role in follicular rupture. In Mus musculus (Mouse), this protein is A disintegrin and metalloproteinase with thrombospondin motifs 1 (Adamts1).